The chain runs to 234 residues: Exotoxin type G (234 aa).

A signal peptide spans 1–24 (MKTNILTIIILSCVFSYGSQLAYA).

It belongs to the staphylococcal/streptococcal toxin family.

Mitogenic for human peripheral blood lymphocytes. The protein is Exotoxin type G (speG) of Streptococcus pyogenes serotype M3 (strain ATCC BAA-595 / MGAS315).